Consider the following 208-residue polypeptide: MAQVMISQHPLVQHKLTLLRRATTEPKKFRELVRELSQFLLYEATLDLPLQERIVDTPLAPYHGHRIAERVGLVPILRAGLGMVDPILDLIPTAHVWHLGLYRDHATLKPVTYYNKLPPEVDVDLCLVLDPMLATGGSAVAAVTVLKEWGASRIKFLGLIAAPEGVQALHQEHPDVPIHLAAIDDCLNDHGYIVPGLGDAGDRLFGTG.

5-phospho-alpha-D-ribose 1-diphosphate contacts are provided by residues R78, R103, and 130 to 138 (DPMLATGGS). Uracil-binding positions include I193 and 198–200 (GDA). D199 serves as a coordination point for 5-phospho-alpha-D-ribose 1-diphosphate.

It belongs to the UPRTase family. It depends on Mg(2+) as a cofactor.

The enzyme catalyses UMP + diphosphate = 5-phospho-alpha-D-ribose 1-diphosphate + uracil. It participates in pyrimidine metabolism; UMP biosynthesis via salvage pathway; UMP from uracil: step 1/1. Allosterically activated by GTP. Functionally, catalyzes the conversion of uracil and 5-phospho-alpha-D-ribose 1-diphosphate (PRPP) to UMP and diphosphate. In Roseiflexus sp. (strain RS-1), this protein is Uracil phosphoribosyltransferase.